We begin with the raw amino-acid sequence, 785 residues long: Cadherin-7 (785 aa).

The signal sequence occupies residues 1 to 27 (MKLGKVEFCHFLQLIALFLCFSGMSQA). The propeptide occupies 28 to 47 (ELSRSRSKPYFQSGRSRTKR). The Extracellular segment spans residues 28–607 (ELSRSRSKPY…AYVLPAGLST (580 aa)). 5 consecutive Cadherin domains span residues 49 to 153 (WVWN…EPKF), 154 to 262 (LDGP…PPRF), 263 to 377 (PRRS…PPVF), 378 to 482 (SSPL…APEF), and 482 to 599 (FAMD…AEAY). Residues Asn-449 and Asn-530 are each glycosylated (N-linked (GlcNAc...) asparagine). Residues 608 to 628 (GALIAILACVLTLLVLILLIV) traverse the membrane as a helical segment. The Cytoplasmic segment spans residues 629 to 785 (TMRRRKKEPL…YGTGQESLYS (157 aa)).

It is found in the cell membrane. Cadherins are calcium-dependent cell adhesion proteins. They preferentially interact with themselves in a homophilic manner in connecting cells; cadherins may thus contribute to the sorting of heterogeneous cell types. The sequence is that of Cadherin-7 (CDH7) from Homo sapiens (Human).